Here is a 360-residue protein sequence, read N- to C-terminus: Fructose import permease protein FrcC (360 aa).

9 helical membrane-spanning segments follow: residues 48 to 68 (AAVPLIVLVLSLIAFGVILGG), 84 to 106 (AIVGIVGAAQTLVILTAGIDLSV), 125 to 145 (GFPPALSVICGLGVGALCGYI), 155 to 175 (LPPFIVTLGMWQIVLASNFLY), 205 to 225 (AVFTYGVVVMVLLVCLLWYVL), 254 to 274 (MLISIYTLSGLICALAGWALI), 284 to 304 (AGQFANIESITAVVIGGISLF), 310 to 330 (IMGMLFGALIVGVFSLGLRLM), and 335 to 355 (QWTYLLIGLLIIIAVAIDQWI).

The protein belongs to the binding-protein-dependent transport system permease family. In terms of assembly, the complex is composed of two ATP-binding proteins (FrcA), two transmembrane proteins (FrcC) and a solute-binding protein (FrcB).

Its subcellular location is the cell inner membrane. Its function is as follows. Part of the high-affinity ABC transporter complex FrcBCA involved in fructose uptake. Is also a high-affinity transporter for ribose and mannose. Responsible for the translocation of the substrate across the membrane. In Rhizobium meliloti (Ensifer meliloti), this protein is Fructose import permease protein FrcC.